The chain runs to 206 residues: Large ribosomal subunit protein uL22m (206 aa).

The N-terminal 40 residues, 1-40, are a transit peptide targeting the mitochondrion; it reads MAAALLRELGALWVPNLRIWTTQMLRVLPQSCIHTSTSLD.

This sequence belongs to the universal ribosomal protein uL22 family. Component of the mitochondrial ribosome large subunit (39S) which comprises a 16S rRNA and about 50 distinct proteins.

The protein resides in the mitochondrion. The polypeptide is Large ribosomal subunit protein uL22m (Mrpl22) (Rattus norvegicus (Rat)).